The sequence spans 292 residues: Probable alpha-L-glutamate ligase (292 aa).

The ATP-grasp domain occupies 104–287 (HQLLAAKGID…VATRIIEHVE (184 aa)). ATP-binding positions include lysine 141, 178-179 (EF), aspartate 187, and 211-213 (RSN). Aspartate 248, glutamate 260, and asparagine 262 together coordinate Mg(2+). Mn(2+)-binding residues include aspartate 248, glutamate 260, and asparagine 262.

It belongs to the RimK family. The cofactor is Mg(2+). Mn(2+) serves as cofactor.

This is Probable alpha-L-glutamate ligase from Stenotrophomonas maltophilia (strain K279a).